The chain runs to 859 residues: Envelope glycoprotein gp160 (859 aa).

The signal sequence occupies residues 1-24 (MCGRNQLFVASLLASACLIYCVQY). The Extracellular segment spans residues 25-673 (VTVFYGVPVW…LTSWIKYIQY (649 aa)). Residue N36 is glycosylated (N-linked (GlcNAc...) asparagine; by host). A disulfide bridge connects residues C43 and C56. N-linked (GlcNAc...) asparagine; by host glycosylation is found at N69, N78, N113, N119, N131, N137, N145, N160, N173, N186, N200, N232, N235, N242, N266, N272, N283, N294, N304, N359, N392, N402, N405, N442, N457, and N460. 5 disulfide bridges follow: C100/C208, C107/C199, C112/C157, C221/C251, and C231/C243. A V1 region spans residues 112-156 (CNSTTAKNTTSTPTTTTTANTTIGENSSCIRTDNCTGLGEEEMVD). The tract at residues 157 to 199 (CQFNMTGLERDKKKLYNETWYSKDVVCESNDTKKEKTCYMNHC) is V2. Positions 299–331 (CKRPGNKTVVPITLMSGLVFHSQPINRRPRQAW) are V3. C299 and C332 are oxidised to a cystine. Intrachain disulfides connect C384/C441 and C391/C414. The segment at 391-414 (CNMTWFLNWVENRTNQTQHNYVPC) is V4. Residues 457–463 (NQTNITF) are V5. The interval 506 to 526 (GVFVLGFLGFLTTAGAAMGAA) is fusion peptide. The interval 569-585 (LQARVTAIEKYLKDQAQ) is immunosuppression. N-linked (GlcNAc...) asparagine; by host glycans are attached at residues N605, N614, and N630. The stretch at 614–646 (NMTWQEWEQRIRNLEANISESLEQAQIQQEKNM) forms a coiled coil. Residues 651–672 (KLNSWDVFGNWFDLTSWIKYIQ) are MPER; binding to GalCer. A helical transmembrane segment spans residues 674-694 (GVYIVVGIIVLRIVIYVVQML). Topologically, residues 695 to 859 (SRLRKGYRPV…IRQGAEIALL (165 aa)) are cytoplasmic. The YXXV motif; contains endocytosis signal motif lies at 701 to 704 (YRPV). A lipid anchor (S-palmitoyl cysteine; by host) is attached at C767. A Di-leucine internalization motif motif is present at residues 858–859 (LL).

As to quaternary structure, the mature envelope protein (Env) consists of a homotrimer of non-covalently associated gp120-gp41 heterodimers. The resulting complex protrudes from the virus surface as a spike. There seems to be as few as 10 spikes on the average virion. Interacts with human CD4, CCR5 and CXCR4, to form a P4HB/PDI-CD4-CXCR4-gp120 complex. Gp120 also interacts with the C-type lectins CD209/DC-SIGN and CLEC4M/DC-SIGNR (collectively referred to as DC-SIGN(R)). Gp120 and gp41 interact with GalCer. The mature envelope protein (Env) consists of a homotrimer of non-covalently associated gp120-gp41 heterodimers. The resulting complex protrudes from the virus surface as a spike. There seems to be as few as 10 spikes on the average virion. Post-translationally, specific enzymatic cleavages in vivo yield mature proteins. Envelope glycoproteins are synthesized as an inactive precursor that is heavily N-glycosylated and processed likely by host cell furin in the Golgi to yield the mature SU and TM proteins. The cleavage site between SU and TM requires the minimal sequence [KR]-X-[KR]-R. In terms of processing, palmitoylation of the transmembrane protein and of Env polyprotein (prior to its proteolytic cleavage) is essential for their association with host cell membrane lipid rafts. Palmitoylation is therefore required for envelope trafficking to classical lipid rafts, but not for viral replication.

It localises to the virion membrane. The protein localises to the host cell membrane. It is found in the host endosome membrane. Its function is as follows. The surface protein gp120 (SU) attaches the virus to the host lymphoid cell by binding to the primary receptor CD4. This interaction induces a structural rearrangement creating a high affinity binding site for a chemokine coreceptor like CXCR4 and/or CCR5. This peculiar 2 stage receptor-interaction strategy allows gp120 to maintain the highly conserved coreceptor-binding site in a cryptic conformation, protected from neutralizing antibodies. Since CD4 also displays a binding site for the disulfide-isomerase P4HB/PDI, a P4HB/PDI-CD4-CXCR4-gp120 complex may form. In that complex, P4HB/PDI could reach and reduce gp120 disulfide bonds, causing major conformational changes in gp120. TXN, another PDI family member could also be involved in disulfide rearrangements in Env during fusion. These changes are transmitted to the transmembrane protein gp41 and are thought to activate its fusogenic potential by unmasking its fusion peptide. The surface protein gp120 is a ligand for CD209/DC-SIGN and CLEC4M/DC-SIGNR, which are respectively found on dendritic cells (DCs), and on endothelial cells of liver sinusoids and lymph node sinuses. These interactions allow capture of viral particles at mucosal surfaces by these cells and subsequent transmission to permissive cells. DCs are professional antigen presenting cells, critical for host immunity by inducing specific immune responses against a broad variety of pathogens. They act as sentinels in various tissues where they take up antigen, process it, and present it to T-cells following migration to lymphoid organs. HIV subverts the migration properties of dendritic cells to gain access to CD4+ T-cells in lymph nodes. Virus transmission to permissive T-cells occurs either in trans (without DCs infection, through viral capture and transmission), or in cis (following DCs productive infection, through the usual CD4-gp120 interaction), thereby inducing a robust infection. In trans infection, bound virions remain infectious over days and it is proposed that they are not degraded, but protected in non-lysosomal acidic organelles within the DCs close to the cell membrane thus contributing to the viral infectious potential during DCs' migration from the periphery to the lymphoid tissues. On arrival at lymphoid tissues, intact virions recycle back to DCs' cell surface allowing virus transmission to CD4+ T-cells. Virion capture also seems to lead to MHC-II-restricted viral antigen presentation, and probably to the activation of HIV-specific CD4+ cells. Functionally, the transmembrane protein gp41 (TM) acts as a class I viral fusion protein. Under the current model, the protein has at least 3 conformational states: pre-fusion native state, pre-hairpin intermediate state, and post-fusion hairpin state. During fusion of viral and target intracellular membranes, the coiled coil regions (heptad repeats) assume a trimer-of-hairpins structure, positioning the fusion peptide in close proximity to the C-terminal region of the ectodomain. The formation of this structure appears to drive apposition and subsequent fusion of viral and target cell membranes. Complete fusion occurs in host cell endosomes and is dynamin-dependent, however some lipid transfer might occur at the plasma membrane. The virus undergoes clathrin-dependent internalization long before endosomal fusion, thus minimizing the surface exposure of conserved viral epitopes during fusion and reducing the efficacy of inhibitors targeting these epitopes. Membranes fusion leads to delivery of the nucleocapsid into the cytoplasm. In terms of biological role, the envelope glycoprotein gp160 precursor down-modulates cell surface CD4 antigen by interacting with it in the endoplasmic reticulum and blocking its transport to the cell surface. Its function is as follows. The gp120-gp41 heterodimer seems to contribute to T-cell depletion during HIV-1 infection. The envelope glycoproteins expressed on the surface of infected cells induce apoptosis through an interaction with uninfected cells expressing the receptor (CD4) and the coreceptors CXCR4 or CCR5. This type of bystander killing may be obtained by at least three distinct mechanisms. First, the interaction between the 2 cells can induce cellular fusion followed by nuclear fusion within the syncytium. Syncytia are condemned to die from apoptosis. Second, the 2 interacting cells may not fuse entirely and simply exchange plasma membrane lipids, after a sort of hemifusion process, followed by rapid death. Third, it is possible that virus-infected cells, on the point of undergoing apoptosis, fuse with CD4-expressing cells, in which case apoptosis is rapidly transmitted from one cell to the other and thus occurs in a sort of contagious fashion. The gp120-gp41 heterodimer allows rapid transcytosis of the virus through CD4 negative cells such as simple epithelial monolayers of the intestinal, rectal and endocervical epithelial barriers. Both gp120 and gp41 specifically recognize glycosphingolipids galactosyl-ceramide (GalCer) or 3' sulfo-galactosyl-ceramide (GalS) present in the lipid rafts structures of epithelial cells. Binding to these alternative receptors allows the rapid transcytosis of the virus through the epithelial cells. This transcytotic vesicle-mediated transport of virions from the apical side to the basolateral side of the epithelial cells does not involve infection of the cells themselves. The protein is Envelope glycoprotein gp160 (env) of Homo sapiens (Human).